The chain runs to 1429 residues: MSIGETSNYDRINDYASVRISLARPQDIKAWSFGEVKKPETINYRTYRPEKDGLFCERIFGPEKDWECACGKYRGMKYKGMICDRCGVKVTHSRVRRKRMGHIELAAPVVHIWFFKAMPSRLGNLLAMKTSSLEKVIYFQDYVVTDPKDTDLEMLQLLTEEEYRAARQQYGSGSFQADMGAEAVRDLLNKLDLVTLSDQLRVDLAETGSKQKKKDLINRLKIVESIRDSDNRPEWMVLDVIPVIPPDLRPLVLLDSGNFATSDLNDLYRRIINRNNRLRKLVDLNAPEVIIRNEKRMLQQSVDALFDNNRCKRPVLGSSNRPLKSLTDMIKGKQGRFRENLLGKRVDYSARSVIVVGPRLKLHQCGLPKKIALELYQPFIIRRLKELGHADTIKSAKKMLERKDEEVWDILEQVITNHPVLLNRAPTLHRMGIQAFEPTLVEGNAIHLHPLVCKGFNADFDGDQMAVHLPLSIEAQVEAHTLMMSTNNVFAPSNGKPIMSPSQDIVMGCYFMTVEMPDQKGEGMTFSTYEEVDYALAQGIVGLHTRIKLRLPKYQKLKTDDESGEYGAIIDTTPGRVRFNEMLPVGMDFYNRAMRSGDLAKSISDCYQRLGRKATIHLLDDMMQTGFRESTRSGLSFATDDLVTPDTKLQFIKEAEKEVMKHKKAYDRGLMTGKERYNQVLDAWTHAREAITADMMSAMENDIRPGGWYINPVFLMSHSGARGGIEQIRQLAGMRGLMAKPTGEIIETPIKANFREGLSVLEYFSSTHGARKGLADTALKTADSGYLTRKLADVAQNVVVTMHDCGTTQGITKGVVYRGEKVEVSLAESINGRVSLKSIVNPVTDEVIVEANQMITPEIARNIEAMGLEKIQVRTPMSCDAPLGVCRCCYGMDMSTGSMVEEGMAVGIIAAQSIGEPGTQLTMRTFHIGGSVSKQVEESDIKTSRDGEVRLTRMKAVTNAEGRDIVLTRNGQIMLVDDRGREVESYDIPTGAMLMVKEGDKVTAGQVLCEWNPYSIPILSEVTGKIRFEDVVEGETMRLDREASGNTRMTIIDHKGDLHPQLVIEDETGRPLHAQYLPERATISVKEGEEVIPGKVLAEMPRETGGVSDITGGLPRVTEIFEARKPKDPAVIAEVDGEVEILSERKRGKRTIIVRSESGIEREHLVPHGKHFLVHTGDIVKAGQALVDGALVPHDILRVTGEEAVQQYLLHEIQQVYRSQRVEINDKHGEIIIARMLRKVKIENAGDTNLLPGSVMDRFHFRKANQDLQKCIKIANPGDTDYTEGTIVPKEAFEQTNAEVEAMGGTPAKGKRCKSATASTQLLGITKAAVQSNSFISAASFQETTKVLTEAALAGKVDKLVGLKENVILGHLIPAGTGFRIFQESEVNYRREALEELSQAPVSALEESFPLLGGDGEPASTTSSTTEGE.

Positions 68, 70, 83, and 86 each coordinate Zn(2+). Positions 459, 461, and 463 each coordinate Mg(2+). Cysteine 805, cysteine 879, cysteine 886, and cysteine 889 together coordinate Zn(2+). A disordered region spans residues 1407–1429 (ESFPLLGGDGEPASTTSSTTEGE). A compositionally biased stretch (polar residues) spans 1419–1429 (ASTTSSTTEGE).

It belongs to the RNA polymerase beta' chain family. In terms of assembly, the RNAP catalytic core consists of 2 alpha, 1 beta, 1 beta' and 1 omega subunit. When a sigma factor is associated with the core the holoenzyme is formed, which can initiate transcription. Mg(2+) serves as cofactor. Zn(2+) is required as a cofactor.

The enzyme catalyses RNA(n) + a ribonucleoside 5'-triphosphate = RNA(n+1) + diphosphate. DNA-dependent RNA polymerase catalyzes the transcription of DNA into RNA using the four ribonucleoside triphosphates as substrates. This is DNA-directed RNA polymerase subunit beta' from Rhodopirellula baltica (strain DSM 10527 / NCIMB 13988 / SH1).